Reading from the N-terminus, the 626-residue chain is Nuclear RNA export factor 2 (626 aa).

Residue Ser34 is modified to Phosphoserine. One can recognise an RRM domain in the interval Trp124–Tyr203. LRR repeat units lie at residues Glu271–Pro296, Lys297–Leu320, Lys321–Asp348, and Cys349–Lys376. The region spanning Leu391–Val541 is the NTF2 domain. The TAP-C domain maps to Gln570–Ile625.

This sequence belongs to the NXF family. Interacts with NXT1, NXT2, E1B-AP5, the REF proteins and with nucleoporins, Nup62, Nup153 and Nup214. Interacts with LUZP4. Expressed almost exclusively in testis. Also expressed in several cancers.

The protein resides in the nucleus. Its subcellular location is the nucleoplasm. It is found in the cytoplasm. In terms of biological role, involved in the export of mRNA from the nucleus to the cytoplasm. This Homo sapiens (Human) protein is Nuclear RNA export factor 2 (NXF2).